The primary structure comprises 117 residues: UPF0295 protein YgzB (117 aa).

Helical transmembrane passes span 13–33 (TFAL…IFFK) and 41–61 (LFMI…FWIG).

This sequence belongs to the UPF0295 family.

The protein localises to the cell membrane. The chain is UPF0295 protein YgzB (ygzB) from Bacillus subtilis (strain 168).